Reading from the N-terminus, the 230-residue chain is PKHD-type hydroxylase PD_1553 (230 aa).

One can recognise a Fe2OG dioxygenase domain in the interval 78–182 (RTLPPRFNRY…RIASFFWVQS (105 aa)). Residues histidine 96, aspartate 98, and histidine 163 each coordinate Fe cation. Residue arginine 173 coordinates 2-oxoglutarate.

It depends on Fe(2+) as a cofactor. L-ascorbate is required as a cofactor.

The polypeptide is PKHD-type hydroxylase PD_1553 (Xylella fastidiosa (strain Temecula1 / ATCC 700964)).